We begin with the raw amino-acid sequence, 318 residues long: MKWNKYSIQTTTDAVDMISSALNDIGIEGIEIEDNVQLTKEEAKSMFVDFIPDLPPDDGRAKVNFYIDSEEDDGSMLEKVKAELEDLRMFIDIGEGTITESETEDKDWINNWKQYWHTFTIGDLFIKPTWEPETEEMKGHAVLSIDPGTAFGTGSHETTRMVIKQLQKYVKDGDEVLDVGCGSGILSVVALKYGAKHAFGTDLDPNAIIASEENAEQNNIDKKQLEVIEGNIIDDKAVKDACGYECYDIVCANILADVLEPLSTCIHEHMKHGAYFITSGIIDTKENEVAEAFKKNPELEIVEINHDGEWVNITARRK.

Residues threonine 159, glycine 180, aspartate 202, and asparagine 253 each coordinate S-adenosyl-L-methionine.

Belongs to the methyltransferase superfamily. PrmA family.

The protein resides in the cytoplasm. It carries out the reaction L-lysyl-[protein] + 3 S-adenosyl-L-methionine = N(6),N(6),N(6)-trimethyl-L-lysyl-[protein] + 3 S-adenosyl-L-homocysteine + 3 H(+). In terms of biological role, methylates ribosomal protein L11. The chain is Ribosomal protein L11 methyltransferase from Lachnospira eligens (strain ATCC 27750 / DSM 3376 / VPI C15-48 / C15-B4) (Eubacterium eligens).